We begin with the raw amino-acid sequence, 302 residues long: MMTLSSMPVTHRADAKSGHSFDANRHWAASLTLGFCAQNSGDTRVTRMNIARHYGPLRVQRPFYPEGKDGCCHVYLLHPPGGVVSGDALNIDISLTKGAHSLITTPAANKLYKADSNGVAWSQTTNLKVDDNATLEWLPQETLAFDGSRGVQVFNIELAKTAKCLGWEILGLGRPASDLPFATGCIEQRFKLTQDGKPLWLERQNLDPTHPRFNGKWGQGGATVHGTFWTVGLSDPTAAIAALREQLPPSNNWAATYRRDVLLVRYLGHERNQVWKLFEQVRNILRPLLSGHQATIPRIWLT.

This sequence belongs to the UreD family. UreD, UreF and UreG form a complex that acts as a GTP-hydrolysis-dependent molecular chaperone, activating the urease apoprotein by helping to assemble the nickel containing metallocenter of UreC. The UreE protein probably delivers the nickel.

It localises to the cytoplasm. Its function is as follows. Required for maturation of urease via the functional incorporation of the urease nickel metallocenter. In Pseudoalteromonas translucida (strain TAC 125), this protein is Urease accessory protein UreD.